Reading from the N-terminus, the 324-residue chain is Cytochrome f (324 aa).

Residues 1 to 30 (MNMRFSPKALVRQLGRLSLVACLSLGLLGA) form the signal peptide. Residues tyrosine 42, cysteine 62, cysteine 65, and histidine 66 each contribute to the heme site. Residues 290–310 (VLGVIAFFFAVMLAQIMLVLK) form a helical membrane-spanning segment.

This sequence belongs to the cytochrome f family. In terms of assembly, the 4 large subunits of the cytochrome b6-f complex are cytochrome b6, subunit IV (17 kDa polypeptide, PetD), cytochrome f and the Rieske protein, while the 4 small subunits are PetG, PetL, PetM and PetN. The complex functions as a dimer. Heme serves as cofactor.

The protein localises to the cellular thylakoid membrane. Component of the cytochrome b6-f complex, which mediates electron transfer between photosystem II (PSII) and photosystem I (PSI), cyclic electron flow around PSI, and state transitions. This Synechococcus elongatus (strain ATCC 33912 / PCC 7942 / FACHB-805) (Anacystis nidulans R2) protein is Cytochrome f.